The following is a 201-amino-acid chain: Glycerol-3-phosphate acyltransferase (201 aa).

5 helical membrane-spanning segments follow: residues 10–30 (ALILTGVLGYLLGSIPFGIVI), 59–79 (PAALATLLLDSGKGAIAVLIA), 87–107 (AAQLAAFTSFLGHLFPVWLGF), 116–136 (FLGTLLALAWPVGLACCLTWL), and 161–181 (ILLGYGQMAALGAVLAVLIFI).

This sequence belongs to the PlsY family. As to quaternary structure, probably interacts with PlsX.

It localises to the cell inner membrane. The enzyme catalyses an acyl phosphate + sn-glycerol 3-phosphate = a 1-acyl-sn-glycero-3-phosphate + phosphate. It functions in the pathway lipid metabolism; phospholipid metabolism. Catalyzes the transfer of an acyl group from acyl-phosphate (acyl-PO(4)) to glycerol-3-phosphate (G3P) to form lysophosphatidic acid (LPA). This enzyme utilizes acyl-phosphate as fatty acyl donor, but not acyl-CoA or acyl-ACP. The chain is Glycerol-3-phosphate acyltransferase from Cereibacter sphaeroides (strain ATCC 17029 / ATH 2.4.9) (Rhodobacter sphaeroides).